The sequence spans 480 residues: Oxysterol-binding protein-related protein 2 (480 aa).

A disordered region spans residues M1–H60. A compositionally biased stretch (polar residues) spans D15 to V30. Residues S19 and S20 each carry the phosphoserine modification. Residues K90, H178–H179, and E427–R431 contribute to the a 1,2-diacyl-sn-glycero-3-phospho-(1D-myo-inositol-4,5-bisphosphate) site.

The protein belongs to the OSBP family. As to quaternary structure, monomer. Homotetramer; phosphatidylinositol-4,5-bisphosphate binding promotes formation of stable tetramers. Interacts with DIAPH1. Widely expressed.

Its subcellular location is the cytoplasm. The protein localises to the cytosol. It localises to the lipid droplet. The protein resides in the cell membrane. Functionally, intracellular transport protein that binds sterols and phospholipids and mediates lipid transport between intracellular compartments. Increases plasma membrane cholesterol levels and decreases phosphatidylinositol-4,5-bisphosphate levels in the cell membrane. Binds phosphoinositides, such as phosphatidylinositol-4,5-bisphosphate. Exhibits strong binding to phosphatidic acid and weak binding to phosphatidylinositol 3-phosphate. Binds cholesterol, dehydroergosterol, 22(R)-hydroxycholesterol and 25-hydroxycholesterol (in vitro). The sequence is that of Oxysterol-binding protein-related protein 2 (OSBPL2) from Homo sapiens (Human).